Consider the following 561-residue polypeptide: MRLWKSMAWGILLWHSQSGALCPAWPPARAAEEITRLQQQLADWNDIYWKQGVSAVDDSVYDQLSARLVQWQRCVGQDVSSTPVSPPLNGTTMHPVAHTGVRKLADRQAVEQWMRGRSELWVQPKVDGVAVTLVYQNGKLTRAISRGNGLQGEDWTPKIRLIPSIPQTTQGALANAVLQGEIFLQREGHIQQRMGGMNARSKVAGMLMRQDNASALNSLGIFIWAWPDGPANMPERLSQLAKAGFSLTNKYTLAVKDASEVERARQSWLTSALPFVTDGVVIRMAKEPASQHWRPGQGDWLAAWKYPPVAQVAQVSAIQFSVGKSGKITVVASLVPVILDDKRVQRVNIGSVKRWEAWDIAPGDQILVSLAGQGIPRLDEVVWRSRERSKPVPPDSHFNSLTCFYASATCQEQFISRLVWLGSRSALGLDGMGEASWRALHQTHRFEHIFSWLALTSAQIANTPGFAKGKSEQIWRQFNLARRQPFTRWIMAMDIPLTQAALQASGDRSWEQLLMRTEQHWRQLPATGERRAGRVIDWRDNPQIKTLSRWLAAQHIPGFGS.

Lys-125 (N6-AMP-lysine intermediate) is an active-site residue.

It belongs to the NAD-dependent DNA ligase family. LigB subfamily.

It carries out the reaction NAD(+) + (deoxyribonucleotide)n-3'-hydroxyl + 5'-phospho-(deoxyribonucleotide)m = (deoxyribonucleotide)n+m + AMP + beta-nicotinamide D-nucleotide.. Catalyzes the formation of phosphodiester linkages between 5'-phosphoryl and 3'-hydroxyl groups in double-stranded DNA using NAD as a coenzyme and as the energy source for the reaction. The protein is DNA ligase B of Salmonella choleraesuis (strain SC-B67).